The following is a 504-amino-acid chain: L-carnitine/gamma-butyrobetaine antiporter (504 aa).

The next 12 membrane-spanning stretches (helical) occupy residues 10–30 (IEPK…WLTV), 51–71 (WGWA…WLVF), 92–112 (IFMM…SIEI), 143–163 (GPLP…FFFV), 195–215 (FYLV…TPLV), 231–251 (LDAI…ACGL), 263–283 (SYLS…SFIM), 316–336 (WTVF…IFLA), 347–367 (LCFG…TVLG), 398–418 (WAAL…CFIA), 446–466 (LLVR…LLAL), and 475–495 (AIIA…LSFI).

The protein belongs to the BCCT transporter (TC 2.A.15) family. CaiT subfamily. As to quaternary structure, homotrimer.

Its subcellular location is the cell inner membrane. It catalyses the reaction 4-(trimethylamino)butanoate(in) + (R)-carnitine(out) = 4-(trimethylamino)butanoate(out) + (R)-carnitine(in). Its pathway is amine and polyamine metabolism; carnitine metabolism. Functionally, catalyzes the exchange of L-carnitine for gamma-butyrobetaine. The sequence is that of L-carnitine/gamma-butyrobetaine antiporter from Escherichia coli O6:K15:H31 (strain 536 / UPEC).